We begin with the raw amino-acid sequence, 720 residues long: Mitogen-activated protein kinase 6 (720 aa).

Met-1 participates in a covalent cross-link: Peptide (Met-Gly) (interchain with G-Cter in ubiquitin). The 297-residue stretch at 20 to 316 (YMDLKPLGCG…AEEALSHPYM (297 aa)) folds into the Protein kinase domain. ATP is bound by residues 26–34 (LGCGGNGLV) and Lys-49. The active-site Proton acceptor is the Asp-152. Phosphoserine; by PAK1, PAK2 and PAK3 is present on Ser-189. Residues 189-191 (SEG) carry the SEG motif motif. An FRIEDE motif motif is present at residues 332–337 (FHIEDE). Phosphoserine is present on residues Ser-386, Ser-554, and Ser-556. Residues 638 to 657 (SEMLETEPVEEGKRGERGRE) are disordered. The segment covering 647 to 657 (EEGKRGERGRE) has biased composition (basic and acidic residues). Residue Ser-683 is modified to Phosphoserine. Residues 700–714 (AMKSSPQIPHKTYSS) show a composition bias toward polar residues. Residues 700–720 (AMKSSPQIPHKTYSSILKHLN) are disordered.

It belongs to the protein kinase superfamily. CMGC Ser/Thr protein kinase family. MAP kinase subfamily. In terms of assembly, heterodimer with ERK4/MAPK4. Interacts with (via FRIEDE motif) MAPKAPK5. Interacts with UBE3A; this interaction may be indirect and mediated by HERC2, possibly via HERC2 interaction with NEURL4. Mg(2+) is required as a cofactor. Phosphorylated at Ser-189 by PAK1, PAK2 and PAK3 resulting in catalytic activation. Phosphorylated by MAPKAPK5 at other sites. In terms of processing, ubiquitination at Met-1 leads to degradation by the proteasome pathway.

It localises to the cytoplasm. The protein localises to the nucleus. The enzyme catalyses L-seryl-[protein] + ATP = O-phospho-L-seryl-[protein] + ADP + H(+). It catalyses the reaction L-threonyl-[protein] + ATP = O-phospho-L-threonyl-[protein] + ADP + H(+). Activated by phosphorylation at Ser-189. Functionally, atypical MAPK protein. Phosphorylates microtubule-associated protein 2 (MAP2) and MAPKAPK5. The precise role of the complex formed with MAPKAPK5 is still unclear, but the complex follows a complex set of phosphorylation events: upon interaction with atypical MAPKAPK5, ERK3/MAPK6 is phosphorylated at Ser-189 and then mediates phosphorylation and activation of MAPKAPK5, which in turn phosphorylates ERK3/MAPK6. May promote entry in the cell cycle. The protein is Mitogen-activated protein kinase 6 (Mapk6) of Mus musculus (Mouse).